The sequence spans 325 residues: Aldo-keto reductase family 1 member A1 (325 aa).

Residue Thr-2 is modified to N-acetylthreonine. Residue Ser-4 is modified to Phosphoserine. NADP(+)-binding positions include 11–20 (GQKMPLIGLG), Thr-21, and Trp-22. Residue Lys-23 is glycosylated (N-linked (Glc) (glycation) lysine). Phosphoserine is present on Ser-38. Asp-45 serves as a coordination point for NADP(+). Tyr-50 acts as the Proton donor in catalysis. 2 N-linked (Glc) (glycation) lysine glycosylation sites follow: Lys-68 and Lys-85. At Lys-127 the chain carries N6-acetyllysine; alternate. Lys-127 is subject to N6-succinyllysine; alternate. Lys-141 carries an N-linked (Glc) (glycation) lysine glycan. Residue Lys-145 is modified to N6-succinyllysine. Lys-153 is a glycosylation site (N-linked (Glc) (glycation) lysine). The NADP(+) site is built by Ser-162, Asn-163, Ser-211, Leu-213, Ser-215, Ser-216, Lys-263, Ser-264, Ile-265, Thr-266, Arg-269, Gln-272, and Asn-273. Ser-211 carries the phosphoserine modification.

The protein belongs to the aldo/keto reductase family. In terms of assembly, monomer. In terms of tissue distribution, widely expressed.

Its subcellular location is the cytoplasm. The protein localises to the cytosol. It localises to the apical cell membrane. It catalyses the reaction a primary alcohol + NADP(+) = an aldehyde + NADPH + H(+). The catalysed reaction is L-gulonate + NADP(+) = aldehydo-D-glucuronate + NADPH + H(+). The enzyme catalyses L-gulono-1,4-lactone + NADP(+) = D-glucurono-3,6-lactone + NADPH + H(+). It carries out the reaction allyl alcohol + NADP(+) = acrolein + NADPH + H(+). It catalyses the reaction glycerol + NADP(+) = D-glyceraldehyde + NADPH + H(+). The catalysed reaction is glycerol + NADP(+) = L-glyceraldehyde + NADPH + H(+). The enzyme catalyses hydroxyacetone + NADP(+) = methylglyoxal + NADPH + H(+). It carries out the reaction 3-deoxyfructose + NADP(+) = 3-deoxyglucosone + NADPH + H(+). It catalyses the reaction (R)-mevalonate + NADP(+) = (R)-mevaldate + NADPH + H(+). The catalysed reaction is pyridine 3-methanol + NADP(+) = pyridine-3-carbaldehyde + NADPH + H(+). The enzyme catalyses S-nitroso-CoA + NADPH + H(+) = sulfinamide-CoA + NADP(+). It carries out the reaction S-nitrosoglutathione + NADPH + H(+) = S-(hydroxysulfenamide)glutathione + NADP(+). In terms of biological role, catalyzes the NADPH-dependent reduction of a wide variety of carbonyl-containing compounds to their corresponding alcohols. Displays enzymatic activity towards endogenous metabolites such as aromatic and aliphatic aldehydes, ketones, monosaccharides and bile acids. Plays an important role in ascorbic acid biosynthesis by catalyzing the reduction of D-glucuronic acid and D-glucurono-gamma-lactone. Functions as a detoxifiying enzyme by reducing a range of toxic aldehydes. Reduces methylglyoxal and 3-deoxyglucosone, which are present at elevated levels under hyperglycemic conditions and are cytotoxic. Involved also in the detoxification of lipid-derived aldehydes like acrolein. Plays a role in the activation of procarcinogens, such as polycyclic aromatic hydrocarbon trans-dihydrodiols, and in the metabolism of various xenobiotics and drugs. Also acts as an inhibitor of protein S-nitrosylation by mediating degradation of S-nitroso-coenzyme A (S-nitroso-CoA), a cofactor required to S-nitrosylate proteins. S-nitroso-CoA reductase activity is involved in reprogramming intermediary metabolism in renal proximal tubules, notably by inhibiting protein S-nitrosylation of isoform 2 of PKM (PKM2). Also acts as a S-nitroso-glutathione reductase by catalyzing the NADPH-dependent reduction of S-nitrosoglutathione. Displays no reductase activity towards retinoids. The polypeptide is Aldo-keto reductase family 1 member A1 (Akr1a1) (Rattus norvegicus (Rat)).